The following is a 673-amino-acid chain: UvrABC system protein B (673 aa).

One can recognise a Helicase ATP-binding domain in the interval Glu-26–Arg-183. Residue Gly-39–Thr-46 coordinates ATP. The Beta-hairpin motif lies at Tyr-92–Val-115. One can recognise a Helicase C-terminal domain in the interval Gln-431–Leu-597. In terms of domain architecture, UVR spans Gln-633–Leu-668.

This sequence belongs to the UvrB family. Forms a heterotetramer with UvrA during the search for lesions. Interacts with UvrC in an incision complex.

It localises to the cytoplasm. Functionally, the UvrABC repair system catalyzes the recognition and processing of DNA lesions. A damage recognition complex composed of 2 UvrA and 2 UvrB subunits scans DNA for abnormalities. Upon binding of the UvrA(2)B(2) complex to a putative damaged site, the DNA wraps around one UvrB monomer. DNA wrap is dependent on ATP binding by UvrB and probably causes local melting of the DNA helix, facilitating insertion of UvrB beta-hairpin between the DNA strands. Then UvrB probes one DNA strand for the presence of a lesion. If a lesion is found the UvrA subunits dissociate and the UvrB-DNA preincision complex is formed. This complex is subsequently bound by UvrC and the second UvrB is released. If no lesion is found, the DNA wraps around the other UvrB subunit that will check the other stand for damage. The sequence is that of UvrABC system protein B from Klebsiella pneumoniae (strain 342).